The following is a 293-amino-acid chain: Probable 2-(5''-triphosphoribosyl)-3'-dephosphocoenzyme-A synthase (293 aa).

It belongs to the CitG/MdcB family.

It catalyses the reaction 3'-dephospho-CoA + ATP = 2'-(5''-triphospho-alpha-D-ribosyl)-3'-dephospho-CoA + adenine. Its function is as follows. Involved in the formation of 2-(5''-phosphoribosyl)-3'-dephosphocoenzyme-A, the prosthetic group of the acyl-carrier protein of the malonate decarboxylase. In Pseudomonas aeruginosa (strain UCBPP-PA14), this protein is Probable 2-(5''-triphosphoribosyl)-3'-dephosphocoenzyme-A synthase.